The chain runs to 326 residues: tRNA(Ile)-lysidine synthase (326 aa).

25–30 (SGGQDS) lines the ATP pocket.

This sequence belongs to the tRNA(Ile)-lysidine synthase family.

It is found in the cytoplasm. It catalyses the reaction cytidine(34) in tRNA(Ile2) + L-lysine + ATP = lysidine(34) in tRNA(Ile2) + AMP + diphosphate + H(+). In terms of biological role, ligates lysine onto the cytidine present at position 34 of the AUA codon-specific tRNA(Ile) that contains the anticodon CAU, in an ATP-dependent manner. Cytidine is converted to lysidine, thus changing the amino acid specificity of the tRNA from methionine to isoleucine. The sequence is that of tRNA(Ile)-lysidine synthase from Prochlorococcus marinus (strain NATL1A).